Reading from the N-terminus, the 152-residue chain is MKKKINILLINGPNLNLLGTREPEIYGKKTLEQIVNKIKKKSILLNVTLYDFQSNAEHKIVEKIHNCKKNNIQFILINPGAFTHTSISIRDALSAINIPFFEIHISNIFARENFRSHSWMSDIAQGVISGFGNYGYQIALKTAVKFLLEKEK.

Residue Tyr26 is the Proton acceptor of the active site. Substrate contacts are provided by Asn78, His84, and Asp91. The active-site Proton donor is the His104. Substrate is bound by residues Ile105 to Ser106 and Arg115.

This sequence belongs to the type-II 3-dehydroquinase family. In terms of assembly, homododecamer.

It carries out the reaction 3-dehydroquinate = 3-dehydroshikimate + H2O. It functions in the pathway metabolic intermediate biosynthesis; chorismate biosynthesis; chorismate from D-erythrose 4-phosphate and phosphoenolpyruvate: step 3/7. Its function is as follows. Catalyzes a trans-dehydration via an enolate intermediate. The protein is 3-dehydroquinate dehydratase of Buchnera aphidicola subsp. Cinara cedri (strain Cc).